The primary structure comprises 105 residues: Large ribosomal subunit protein uL24 (105 aa).

The protein belongs to the universal ribosomal protein uL24 family. As to quaternary structure, part of the 50S ribosomal subunit.

Functionally, one of two assembly initiator proteins, it binds directly to the 5'-end of the 23S rRNA, where it nucleates assembly of the 50S subunit. Its function is as follows. One of the proteins that surrounds the polypeptide exit tunnel on the outside of the subunit. The chain is Large ribosomal subunit protein uL24 from Aeromonas salmonicida (strain A449).